A 500-amino-acid chain; its full sequence is Glycerol kinase (500 aa).

T12 provides a ligand contact to ADP. The ATP site is built by T12, T13, and S14. Residue T12 coordinates sn-glycerol 3-phosphate. ADP is bound at residue R16. Residues R82, E83, Y135, and D245 each contribute to the sn-glycerol 3-phosphate site. Positions 82, 83, 135, 245, and 246 each coordinate glycerol. ADP contacts are provided by T267 and G310. Residues T267, G310, Q314, and G411 each contribute to the ATP site. ADP is bound by residues G411 and N415.

Belongs to the FGGY kinase family. Homotetramer and homodimer (in equilibrium).

It carries out the reaction glycerol + ATP = sn-glycerol 3-phosphate + ADP + H(+). It participates in polyol metabolism; glycerol degradation via glycerol kinase pathway; sn-glycerol 3-phosphate from glycerol: step 1/1. Its activity is regulated as follows. Activated by phosphorylation and inhibited by fructose 1,6-bisphosphate (FBP). Its function is as follows. Key enzyme in the regulation of glycerol uptake and metabolism. Catalyzes the phosphorylation of glycerol to yield sn-glycerol 3-phosphate. In Clostridium perfringens (strain SM101 / Type A), this protein is Glycerol kinase.